The primary structure comprises 173 residues: Photosystem I assembly protein Ycf3 (173 aa).

3 TPR repeats span residues Ala35–Thr68, Gly72–Leu105, and Gly120–Asn153.

The protein belongs to the Ycf3 family.

It localises to the cellular thylakoid membrane. Functionally, essential for the assembly of the photosystem I (PSI) complex. May act as a chaperone-like factor to guide the assembly of the PSI subunits. This chain is Photosystem I assembly protein Ycf3, found in Nostoc punctiforme (strain ATCC 29133 / PCC 73102).